We begin with the raw amino-acid sequence, 117 residues long: Huntingtin-interacting protein M (117 aa).

Disordered stretches follow at residues 1–30 (MSEK…VPRS) and 71–117 (EASN…RKND). Positions 72-81 (ASNNGSMRNT) are enriched in polar residues. Positions 82 to 117 (SQDREREVDNNREPHSAESDVTRFLFDEMPKSRKND) are enriched in basic and acidic residues.

May interact with the N-terminus of HD.

The protein is Huntingtin-interacting protein M of Homo sapiens (Human).